The sequence spans 274 residues: Ribosomal RNA small subunit methyltransferase A (274 aa).

Residues asparagine 26, leucine 28, glycine 53, glutamate 74, aspartate 94, and asparagine 114 each contribute to the S-adenosyl-L-methionine site.

This sequence belongs to the class I-like SAM-binding methyltransferase superfamily. rRNA adenine N(6)-methyltransferase family. RsmA subfamily.

Its subcellular location is the cytoplasm. It catalyses the reaction adenosine(1518)/adenosine(1519) in 16S rRNA + 4 S-adenosyl-L-methionine = N(6)-dimethyladenosine(1518)/N(6)-dimethyladenosine(1519) in 16S rRNA + 4 S-adenosyl-L-homocysteine + 4 H(+). Functionally, specifically dimethylates two adjacent adenosines (A1518 and A1519) in the loop of a conserved hairpin near the 3'-end of 16S rRNA in the 30S particle. May play a critical role in biogenesis of 30S subunits. The polypeptide is Ribosomal RNA small subunit methyltransferase A (Bdellovibrio bacteriovorus (strain ATCC 15356 / DSM 50701 / NCIMB 9529 / HD100)).